We begin with the raw amino-acid sequence, 487 residues long: Serine/threonine-protein phosphatase 2A activator 1 (487 aa).

Disordered stretches follow at residues 1–28 (MPMI…SSST) and 426–487 (GGIQ…PKPE).

It belongs to the PTPA-type PPIase family.

Its subcellular location is the cytoplasm. The protein resides in the nucleus. The catalysed reaction is [protein]-peptidylproline (omega=180) = [protein]-peptidylproline (omega=0). Its function is as follows. PPIases accelerate the folding of proteins. It catalyzes the cis-trans isomerization of proline imidic peptide bonds in oligopeptides. Acts as a regulatory subunit for PP2A-like phosphatases modulating their activity or substrate specificity, probably by inducing a conformational change in the catalytic subunit, a direct target of the PPIase. Can reactivate inactive phosphatase PP2A-phosphatase methylesterase complexes (PP2Ai) in presence of ATP and Mg(2+) by dissociating the inactive form from the complex. This Mycosarcoma maydis (Corn smut fungus) protein is Serine/threonine-protein phosphatase 2A activator 1 (RRD1).